The chain runs to 198 residues: Dynactin subunit 5 (198 aa).

Residues 179–188 (NTPASKGLPS) are compositionally biased toward polar residues. The segment at 179-198 (NTPASKGLPSTPTKLQTTTT) is disordered. A compositionally biased stretch (low complexity) spans 189-198 (TPTKLQTTTT).

This sequence belongs to the dynactin subunits 5/6 family. Dynactin subunit 5 subfamily. Member of the pointed-end complex of the dynactin shoulder complex.

It is found in the cytoplasm. Its subcellular location is the cytoskeleton. In Dictyostelium discoideum (Social amoeba), this protein is Dynactin subunit 5 (dynE).